We begin with the raw amino-acid sequence, 2060 residues long: Fatty acid synthase subunit beta (2060 aa).

The disordered stretch occupies residues 1–32; it reads MFPGDMESKASSMNGDQPSSPTPSSSTSVTIP. Residues 18–32 are compositionally biased toward low complexity; the sequence is PSSPTPSSSTSVTIP. The interval 182 to 543 is acetyltransferase (AT) domain; it reads VYVIFGGQGN…KAGQGVRVIH (362 aa). The active-site For acetyltransferase activity is Ser301. The enoyl reductase (ER) domain stretch occupies residues 600–845; it reads TRLFLQPPIM…LIVATEGAPD (246 aa). The segment at 1157–1640 is dehydratase (DH) domain; that stretch reads DKNLNWAKAL…CTGDRLAVSM (484 aa). Positions 1549–1661 constitute a MaoC-like domain; the sequence is FEEQEISFTA…VEVQIHKNMA (113 aa). The interval 1679 to 2043 is malonyl/palmitoyl transferase (MT/PT) domain; sequence LVFTGQGSQK…FNEVLRLTGS (365 aa). Ser1824 acts as the For malonyltransferase activity in catalysis.

The protein belongs to the fungal fatty acid synthetase subunit beta family. In terms of assembly, [Alpha(6)beta(6)] hexamers of two multifunctional subunits (alpha and beta).

The enzyme catalyses acetyl-CoA + n malonyl-CoA + 2n NADPH + 4n H(+) = a long-chain-acyl-CoA + n CoA + n CO2 + 2n NADP(+).. It carries out the reaction holo-[ACP] + acetyl-CoA = acetyl-[ACP] + CoA. It catalyses the reaction holo-[ACP] + malonyl-CoA = malonyl-[ACP] + CoA. The catalysed reaction is a (3R)-hydroxyacyl-[ACP] = a (2E)-enoyl-[ACP] + H2O. The enzyme catalyses a 2,3-saturated acyl-[ACP] + NAD(+) = a (2E)-enoyl-[ACP] + NADH + H(+). It carries out the reaction (9Z)-octadecenoyl-[ACP] + H2O = (9Z)-octadecenoate + holo-[ACP] + H(+). The protein operates within mycotoxin biosynthesis. Its function is as follows. Fatty acid synthase subunit beta; part of the gene cluster that mediates the biosynthesis of gramillins A and B, bicyclic lipopeptides that induce cell death in maize leaves but not in wheat leaves. The nonribosomal peptide synthetase GRA1 incorporates respectively a glutamic adic (Glu), a leucine (Leu), a serine (Ser), a hydroxyglutamine (HOGln), a 2-amino decanoic acid, and 2 cysteins (CysB and CysA). The biosynthesis of 2-amino decanoic acid incorporated in gramillins could be initiated by a fatty acid synthase composed of the alpha and beta subunits FGSG_00036 and FGSG_11656. The cytochrome P450 monooxygenase FGSG_15680 could hydroxylate the fatty acid chain. Subsequent oxidation to the ketone by the oxidoreductase FGSG_00048 and transamination by aminotransferase FGSG_00049 could form 2-amino-decanoic acid. On the other hand, FGSG_15680 could also be responsible for the HO-modified glutamine at the gamma-position. Whether hydroxylation occurs on the fully assembled product or on the Gln residue prior to assembly into the gramillins requires further proof. The thioredoxin FGSG_00043 could also be required for the disulfide-bond formation between CysA and CysB. The specific involvement of the remaining proteins from the cluster is more difficult to discern, but could have broader regulatory (FGSG_00040 and FGSG_11657) or enzymatic functions (FGSG_00044 and FGSG_00045). The final C-domain of GRA1 does not possess the expected sequence of a termination CT domain, often implicated in macrocyclization and release of a cyclopeptidein fungal NRPs; and the thioesterase FGSG_00047 may act in concert with the terminal C-domain of GRA1 to catalyze the formation of the macrocyclic anhydride and release of the products. This chain is Fatty acid synthase subunit beta, found in Gibberella zeae (strain ATCC MYA-4620 / CBS 123657 / FGSC 9075 / NRRL 31084 / PH-1) (Wheat head blight fungus).